Consider the following 66-residue polypeptide: MTQLEEQLHNVETVRSITMQLEMALAKLKKDMMRGGDAKQYQVWQSESKAIESAIAIIHYVAGGLK.

This sequence belongs to the YscE family. Component of the heterodimeric YscE-YscG chaperone. The YscE-YscG chaperone forms a stable ternary complex with YscF/SctF.

It is found in the cytoplasm. Its function is as follows. Chaperone of the type III secretion system (T3SS), also called injectisome, which is used to inject bacterial effector proteins into eukaryotic host cells. Along with YscG, prevents premature polymerization of the YscF/SctF needle protein within the cytoplasm. Required for Yop secretion. In Yersinia enterocolitica, this protein is Type 3 secretion system chaperone YscE.